The sequence spans 616 residues: Homeodomain-interacting protein kinase 4 (616 aa).

Residues 11-347 enclose the Protein kinase domain; that stretch reads YDIIEVLGKG…PSAALRHPFV (337 aa). Residues 17–25 and Lys40 each bind ATP; that span reads LGKGTFGEV. Asp136 (proton acceptor) is an active-site residue. A disordered region spans residues 487-616; the sequence is HKARKAPAGS…SFLQHVGGHH (130 aa). Over residues 497–512 the composition is skewed to polar residues; that stretch reads KSDSNFSNLIRLSQAS. Phosphoserine is present on Ser512. Basic and acidic residues predominate over residues 542–560; that stretch reads REGDGPGIKDRPMDAERPG.

This sequence belongs to the protein kinase superfamily. CMGC Ser/Thr protein kinase family. HIPK subfamily. Post-translationally, autophosphorylated. In terms of tissue distribution, expressed at moderate levels in lung and white adipose tissues and weakly in brain and liver.

It localises to the cytoplasm. The enzyme catalyses L-seryl-[protein] + ATP = O-phospho-L-seryl-[protein] + ADP + H(+). The catalysed reaction is L-threonyl-[protein] + ATP = O-phospho-L-threonyl-[protein] + ADP + H(+). Functionally, protein kinase that phosphorylates murine TP53 at Ser-9, and thus induces TP53 repression of BIRC5 promoter. May act as a corepressor of transcription factors (Potential). This is Homeodomain-interacting protein kinase 4 (Hipk4) from Mus musculus (Mouse).